We begin with the raw amino-acid sequence, 343 residues long: Protein RecA (343 aa).

ATP is bound at residue 66-73; sequence GPESSGKT.

The protein belongs to the RecA family.

The protein resides in the cytoplasm. Functionally, can catalyze the hydrolysis of ATP in the presence of single-stranded DNA, the ATP-dependent uptake of single-stranded DNA by duplex DNA, and the ATP-dependent hybridization of homologous single-stranded DNAs. It interacts with LexA causing its activation and leading to its autocatalytic cleavage. This is Protein RecA from Rickettsia bellii (strain RML369-C).